Here is a 190-residue protein sequence, read N- to C-terminus: MTETPNTSSEEIQTSEPSPDNELQVLQQENANLKAELQEQNDRYLMALAEAENSRKRLRKERTEMMQYAVENALMDFLPPIESMEKALGFASQTSEEVKNWAIGFQMILQQFKQIFEEKGVVEYSSKGELFNPYLHEAVEIEETTTIPEGTILEEFTKGYKIGDRPIRVAKVKVAKLPAKGNSDSNEEKE.

The span at 1 to 18 shows a compositional bias: polar residues; that stretch reads MTETPNTSSEEIQTSEPS. A disordered region spans residues 1 to 21; the sequence is MTETPNTSSEEIQTSEPSPDN.

The protein belongs to the GrpE family. In terms of assembly, homodimer.

The protein resides in the cytoplasm. Its function is as follows. Participates actively in the response to hyperosmotic and heat shock by preventing the aggregation of stress-denatured proteins, in association with DnaK and GrpE. It is the nucleotide exchange factor for DnaK and may function as a thermosensor. Unfolded proteins bind initially to DnaJ; upon interaction with the DnaJ-bound protein, DnaK hydrolyzes its bound ATP, resulting in the formation of a stable complex. GrpE releases ADP from DnaK; ATP binding to DnaK triggers the release of the substrate protein, thus completing the reaction cycle. Several rounds of ATP-dependent interactions between DnaJ, DnaK and GrpE are required for fully efficient folding. The chain is Protein GrpE from Chlamydia trachomatis serovar L2b (strain UCH-1/proctitis).